A 131-amino-acid chain; its full sequence is MISATKIRSCLAACVLAAFGATGALADKATIPSESPFAAAEVADGAIVVDIAKMKYETPELHVKVGDTVTWINREAMPHNVHFVAGVLGEAALKGPMMKKEQAYSLTFTEAGTYDYHCTPHPFMRGKVVVE.

Residues 1–26 (MISATKIRSCLAACVLAAFGATGALA) form the signal peptide. Positions 27-131 (DKATIPSESP…PFMRGKVVVE (105 aa)) constitute a Plastocyanin-like domain. Cu cation-binding residues include histidine 79, cysteine 118, histidine 121, and methionine 124.

Cu cation serves as cofactor.

The protein resides in the periplasm. Its pathway is one-carbon metabolism; methylamine degradation. Primary acceptor of electrons from methylamine dehydrogenase. Passes those electrons on either a soluble cytochrome c or to pseudoazurin. In Paracoccus denitrificans, this protein is Amicyanin (mauC).